The chain runs to 414 residues: Enterobactin exporter EntS (414 aa).

At 1–21 (MNRQSWLLNLSLLKTHPAFRA) the chain is on the cytoplasmic side. A helical membrane pass occupies residues 22 to 42 (VFLARFISIVSLGLLGVAVPV). At 43–55 (QIQMMTHSTWQVG) the chain is on the periplasmic side. The helical transmembrane segment at 56 to 76 (LSVTLTGGAMFIGLMVGGVLA) threads the bilayer. Over 77–83 (DRYERKK) the chain is Cytoplasmic. The helical transmembrane segment at 84 to 104 (VILLARGTCGIGFIGLCVNAL) threads the bilayer. The Periplasmic segment spans residues 105 to 109 (LPEPS). The chain crosses the membrane as a helical span at residues 110-130 (LLAIYLLGLWDGFFASLGVTA). At 131 to 156 (LLAATPALVGRENLMQAGAITMLTVR) the chain is on the cytoplasmic side. The helical transmembrane segment at 157–177 (LGSVISPMLGGILLASGGVAW) threads the bilayer. Asn178 is a topological domain (periplasmic). The helical transmembrane segment at 179–199 (YGLAAAGTFITLLPLLTLPRL) threads the bilayer. Over 200–218 (PVPPQPRENPFIALLAAFR) the chain is Cytoplasmic. A helical transmembrane segment spans residues 219-239 (FLLASPLIGGIALLGGLVTMA). Over 240–256 (SAVRVLYPALAMSWQMS) the chain is Periplasmic. The helical transmembrane segment at 257–277 (AAQIGLLYAAIPLGAAIGALT) threads the bilayer. The Cytoplasmic segment spans residues 278–287 (SGQLAHSVRP). Residues 288–307 (GLIMLVSTVGSFLAVGLFAI) form a helical membrane-spanning segment. At 308–313 (MPVWIA) the chain is on the periplasmic side. Residues 314–336 (GVICLALFGWLSAISSLLQYTLL) traverse the membrane as a helical segment. Over 337 to 356 (QTQTPENMLGRMNGLWTAQN) the chain is Cytoplasmic. Residues 357–377 (VTGDAIGAALLGGLGAMMTPV) form a helical membrane-spanning segment. Residue Ala378 is a topological domain, periplasmic. The helical transmembrane segment at 379 to 399 (SASVSGFGLVIIGLLLLLVLG) threads the bilayer. Residues 400–414 (ELRRFRQTPPVSDAG) lie on the Cytoplasmic side of the membrane.

It belongs to the major facilitator superfamily. EntS (TC 2.A.1.38) family.

It localises to the cell inner membrane. Functionally, component of an export pathway for enterobactin. The protein is Enterobactin exporter EntS of Salmonella typhimurium (strain LT2 / SGSC1412 / ATCC 700720).